The following is a 198-amino-acid chain: Na(+)-translocating NADH-quinone reductase subunit E (198 aa).

Helical transmembrane passes span 11–31 (AVFI…FLAV), 35–55 (VSTA…AVPV), 77–97 (FLNF…LEMV), 110–130 (GIFL…SFMV), 140–160 (IVYG…LAGL), and 176–196 (LGIT…FSGI).

The protein belongs to the NqrDE/RnfAE family. Composed of six subunits; NqrA, NqrB, NqrC, NqrD, NqrE and NqrF.

Its subcellular location is the cell inner membrane. The catalysed reaction is a ubiquinone + n Na(+)(in) + NADH + H(+) = a ubiquinol + n Na(+)(out) + NAD(+). Functionally, NQR complex catalyzes the reduction of ubiquinone-1 to ubiquinol by two successive reactions, coupled with the transport of Na(+) ions from the cytoplasm to the periplasm. NqrA to NqrE are probably involved in the second step, the conversion of ubisemiquinone to ubiquinol. This Haemophilus influenzae (strain 86-028NP) protein is Na(+)-translocating NADH-quinone reductase subunit E.